Here is a 487-residue protein sequence, read N- to C-terminus: Bifunctional protein GlmU (487 aa).

The tract at residues 1 to 232 (MAVIVLAAGA…AAELAGVNDR (232 aa)) is pyrophosphorylase. Residues 6–9 (LAAG), K20, Q77, and 82–83 (GT) contribute to the UDP-N-acetyl-alpha-D-glucosamine site. D107 contributes to the Mg(2+) binding site. UDP-N-acetyl-alpha-D-glucosamine contacts are provided by G142, E157, N172, and N230. Position 230 (N230) interacts with Mg(2+). Residues 233–253 (VQLAAAGAELNRRTVTAAMRG) are linker. The interval 254 to 487 (GATIVDPATT…PTSTPQADQE (234 aa)) is N-acetyltransferase. UDP-N-acetyl-alpha-D-glucosamine-binding residues include R335 and K353. The Proton acceptor role is filled by H365. Positions 368 and 379 each coordinate UDP-N-acetyl-alpha-D-glucosamine. Acetyl-CoA is bound by residues A382, 388-389 (NY), S407, and A425. The tract at residues 453–487 (AKKRPGTPAAEAGEAAAKRVAEGGSPTSTPQADQE) is disordered. Polar residues predominate over residues 477 to 487 (SPTSTPQADQE).

In the N-terminal section; belongs to the N-acetylglucosamine-1-phosphate uridyltransferase family. This sequence in the C-terminal section; belongs to the transferase hexapeptide repeat family. Homotrimer. Mg(2+) serves as cofactor.

The protein resides in the cytoplasm. The enzyme catalyses alpha-D-glucosamine 1-phosphate + acetyl-CoA = N-acetyl-alpha-D-glucosamine 1-phosphate + CoA + H(+). It catalyses the reaction N-acetyl-alpha-D-glucosamine 1-phosphate + UTP + H(+) = UDP-N-acetyl-alpha-D-glucosamine + diphosphate. It participates in nucleotide-sugar biosynthesis; UDP-N-acetyl-alpha-D-glucosamine biosynthesis; N-acetyl-alpha-D-glucosamine 1-phosphate from alpha-D-glucosamine 6-phosphate (route II): step 2/2. The protein operates within nucleotide-sugar biosynthesis; UDP-N-acetyl-alpha-D-glucosamine biosynthesis; UDP-N-acetyl-alpha-D-glucosamine from N-acetyl-alpha-D-glucosamine 1-phosphate: step 1/1. It functions in the pathway bacterial outer membrane biogenesis; LPS lipid A biosynthesis. Its function is as follows. Catalyzes the last two sequential reactions in the de novo biosynthetic pathway for UDP-N-acetylglucosamine (UDP-GlcNAc). The C-terminal domain catalyzes the transfer of acetyl group from acetyl coenzyme A to glucosamine-1-phosphate (GlcN-1-P) to produce N-acetylglucosamine-1-phosphate (GlcNAc-1-P), which is converted into UDP-GlcNAc by the transfer of uridine 5-monophosphate (from uridine 5-triphosphate), a reaction catalyzed by the N-terminal domain. In Corynebacterium jeikeium (strain K411), this protein is Bifunctional protein GlmU.